The sequence spans 342 residues: Cell division protein ZipA (342 aa).

Residues 1–6 lie on the Periplasmic side of the membrane; sequence MEDLQL. The chain crosses the membrane as a helical span at residues 7 to 27; sequence VLFILGAIAIVAVLVHGFWSI. Topologically, residues 28–342 are cytoplasmic; the sequence is RRQQPKSLKD…DYLHRIRANA (315 aa). Residues 33–57 form a disordered region; it reads KSLKDSPMGNFYKQQADKESPPKRV. The span at 47–57 shows a compositional bias: basic and acidic residues; that stretch reads QADKESPPKRV.

The protein belongs to the ZipA family. As to quaternary structure, interacts with FtsZ via their C-terminal domains.

It localises to the cell inner membrane. Essential cell division protein that stabilizes the FtsZ protofilaments by cross-linking them and that serves as a cytoplasmic membrane anchor for the Z ring. Also required for the recruitment to the septal ring of downstream cell division proteins. In Shewanella putrefaciens (strain CN-32 / ATCC BAA-453), this protein is Cell division protein ZipA.